The following is a 449-amino-acid chain: Glutamyl-tRNA reductase (449 aa).

Substrate is bound by residues 49–52 (TCNR), Ser-107, 112–114 (EPQ), and Gln-118. Cys-50 serves as the catalytic Nucleophile. 187-192 (GAGETI) is an NADP(+) binding site. The tract at residues 418–449 (QLVERSSEGDDSQQAGADGGAARGDRRAAGGS) is disordered. The span at 440–449 (RGDRRAAGGS) shows a compositional bias: basic and acidic residues.

This sequence belongs to the glutamyl-tRNA reductase family. Homodimer.

It carries out the reaction (S)-4-amino-5-oxopentanoate + tRNA(Glu) + NADP(+) = L-glutamyl-tRNA(Glu) + NADPH + H(+). The protein operates within porphyrin-containing compound metabolism; protoporphyrin-IX biosynthesis; 5-aminolevulinate from L-glutamyl-tRNA(Glu): step 1/2. Its function is as follows. Catalyzes the NADPH-dependent reduction of glutamyl-tRNA(Glu) to glutamate 1-semialdehyde (GSA). The sequence is that of Glutamyl-tRNA reductase from Halorhodospira halophila (strain DSM 244 / SL1) (Ectothiorhodospira halophila (strain DSM 244 / SL1)).